The following is a 249-amino-acid chain: 5'-nucleotidase SurE (249 aa).

A divalent metal cation is bound by residues D8, D9, S39, and N91.

It belongs to the SurE nucleotidase family. It depends on a divalent metal cation as a cofactor.

The protein localises to the cytoplasm. The catalysed reaction is a ribonucleoside 5'-phosphate + H2O = a ribonucleoside + phosphate. In terms of biological role, nucleotidase that shows phosphatase activity on nucleoside 5'-monophosphates. The protein is 5'-nucleotidase SurE of Pseudomonas putida (strain ATCC 47054 / DSM 6125 / CFBP 8728 / NCIMB 11950 / KT2440).